Here is a 46-residue protein sequence, read N- to C-terminus: DNA-directed RNA polymerase subunit Rpo12 (46 aa).

Zn(2+)-binding residues include Cys8, Cys23, and Cys26.

Belongs to the archaeal Rpo12/eukaryotic RPC10 RNA polymerase subunit family. Part of the RNA polymerase complex. Zn(2+) serves as cofactor.

The protein resides in the cytoplasm. It catalyses the reaction RNA(n) + a ribonucleoside 5'-triphosphate = RNA(n+1) + diphosphate. DNA-dependent RNA polymerase (RNAP) catalyzes the transcription of DNA into RNA using the four ribonucleoside triphosphates as substrates. The chain is DNA-directed RNA polymerase subunit Rpo12 from Archaeoglobus fulgidus (strain ATCC 49558 / DSM 4304 / JCM 9628 / NBRC 100126 / VC-16).